A 154-amino-acid polypeptide reads, in one-letter code: Ribosomal RNA large subunit methyltransferase H (154 aa).

S-adenosyl-L-methionine is bound by residues Leu70, Gly102, and 121-126; that span reads LSRMTL.

Belongs to the RNA methyltransferase RlmH family. In terms of assembly, homodimer.

The protein resides in the cytoplasm. The catalysed reaction is pseudouridine(1915) in 23S rRNA + S-adenosyl-L-methionine = N(3)-methylpseudouridine(1915) in 23S rRNA + S-adenosyl-L-homocysteine + H(+). Its function is as follows. Specifically methylates the pseudouridine at position 1915 (m3Psi1915) in 23S rRNA. The protein is Ribosomal RNA large subunit methyltransferase H of Citrifermentans bemidjiense (strain ATCC BAA-1014 / DSM 16622 / JCM 12645 / Bem) (Geobacter bemidjiensis).